Consider the following 728-residue polypeptide: Procollagen-lysine,2-oxoglutarate 5-dioxygenase 1 (728 aa).

A signal peptide spans 1-18 (MRSLLLLAPLAWLLLVQA). 2 N-linked (GlcNAc...) asparagine glycosylation sites follow: Asn-198 and Asn-539. In terms of domain architecture, Fe2OG dioxygenase spans 637-728 (QFDLAFVVRY…RYIAVSFVDP (92 aa)). 2 residues coordinate Fe cation: His-657 and Asp-659. An N-linked (GlcNAc...) asparagine glycan is attached at Asn-687. His-709 contacts Fe cation. Residue Arg-719 is part of the active site.

In terms of assembly, homodimer. Identified in a complex with P3H3 and P3H4. It depends on Fe(2+) as a cofactor. L-ascorbate serves as cofactor. Highly expressed in the liver, heart, lung, skeletal muscle and kidney.

The protein resides in the rough endoplasmic reticulum membrane. It catalyses the reaction L-lysyl-[collagen] + 2-oxoglutarate + O2 = (5R)-5-hydroxy-L-lysyl-[collagen] + succinate + CO2. Functionally, part of a complex composed of PLOD1, P3H3 and P3H4 that catalyzes hydroxylation of lysine residues in collagen alpha chains and is required for normal assembly and cross-linkling of collagen fibrils. Forms hydroxylysine residues in -Xaa-Lys-Gly- sequences in collagens. These hydroxylysines serve as sites of attachment for carbohydrate units and are essential for the stability of the intermolecular collagen cross-links. In Mus musculus (Mouse), this protein is Procollagen-lysine,2-oxoglutarate 5-dioxygenase 1 (Plod1).